Here is a 758-residue protein sequence, read N- to C-terminus: Vesicular-fusion protein SEC18 (758 aa).

Position 226 is a phosphoserine (S226). ATP contacts are provided by residues 281 to 288 (GPPGTGKT) and 564 to 571 (GPAGSGKT).

This sequence belongs to the AAA ATPase family. In terms of assembly, homohexamer. Binds to SEC17.

The protein resides in the cytoplasm. Its function is as follows. Required for vesicle-mediated transport. Catalyzes the fusion of transport vesicles within the Golgi cisternae. Is also required for transport from the endoplasmic reticulum to the Golgi stack. Seems to function as a fusion protein required for the delivery of cargo proteins to all compartments of the Golgi stack independent of vesicle origin. The sequence is that of Vesicular-fusion protein SEC18 (SEC18) from Saccharomyces cerevisiae (strain ATCC 204508 / S288c) (Baker's yeast).